Here is a 255-residue protein sequence, read N- to C-terminus: Borealin-2 (255 aa).

2 disordered regions span residues 1–24 and 107–156; these read MAPR…HSFE and IQKP…STGS. Residues 124–135 show a composition bias toward polar residues; the sequence is AGQQRSSSQSKT.

It belongs to the borealin family. In terms of assembly, component of the CPC complex.

The protein resides in the nucleus. The protein localises to the chromosome. Its subcellular location is the centromere. Functionally, component of the chromosomal passenger complex (CPC), a complex that acts as a key regulator of mitosis. The CPC complex has essential functions at the centromere in ensuring correct chromosome alignment and segregation and is required for chromatin-induced microtubule stabilization and spindle assembly. In Danio rerio (Zebrafish), this protein is Borealin-2 (cdca9).